A 289-amino-acid polypeptide reads, in one-letter code: MKVLVNNHLVEREDATVDIEDRGYQFGDGVYEVVRLYNGKFFTYNEHIDRLYASAAKIDLVIPYSKEELRELLEKLVAENNINTGNVYLQVTRGVQNPRNHVIPDDFPLEGVLTAAAREVPRNERQFVEGGTAITEEDVRWLRCDIKSLNLLGNILAKNKAHQQNALEAILHRGEQVTECSASNVSIIKDGVLWTHAADNLILNGITRQVIIDVAKKNGIPVKEADFTLTDLREADEVFISSTTIEITPITHIDGVQVADGKRGPITAQLHQYFVEEITRACGELEFAK.

Y31 serves as a coordination point for substrate. A pyridoxal 5'-phosphate-binding site is contributed by R50. Substrate-binding residues include R99 and H101. At K147 the chain carries N6-(pyridoxal phosphate)lysine. A pyridoxal 5'-phosphate-binding site is contributed by E179.

The protein belongs to the class-IV pyridoxal-phosphate-dependent aminotransferase family. Homodimer. Pyridoxal 5'-phosphate is required as a cofactor.

It carries out the reaction D-alanine + 2-oxoglutarate = D-glutamate + pyruvate. Functionally, acts on the D-isomers of alanine, leucine, aspartate, glutamate, aminobutyrate, norvaline and asparagine. The enzyme transfers an amino group from a substrate D-amino acid to the pyridoxal phosphate cofactor to form pyridoxamine and an alpha-keto acid in the first half-reaction. The second half-reaction is the reverse of the first, transferring the amino group from the pyridoxamine to a second alpha-keto acid to form the product D-amino acid via a ping-pong mechanism. This is an important process in the formation of D-alanine and D-glutamate, which are essential bacterial cell wall components. The sequence is that of D-alanine aminotransferase (dat) from Listeria monocytogenes serotype 1/2a (strain 10403S).